A 142-amino-acid chain; its full sequence is Peptide methionine sulfoxide reductase MsrB (142 aa).

One can recognise a MsrB domain in the interval 2–125; that stretch reads IKKDKNELNE…NSAAIQFIPY (124 aa). Cys114 functions as the Nucleophile in the catalytic mechanism.

Belongs to the MsrB Met sulfoxide reductase family.

It carries out the reaction L-methionyl-[protein] + [thioredoxin]-disulfide + H2O = L-methionyl-(R)-S-oxide-[protein] + [thioredoxin]-dithiol. This Staphylococcus haemolyticus (strain JCSC1435) protein is Peptide methionine sulfoxide reductase MsrB.